The primary structure comprises 715 residues: Fatty acid oxidation complex subunit alpha (715 aa).

Positions 1–190 are enoyl-CoA hydratase/isomerase; it reads MIYEGKAITV…KVGAVDAVVA (190 aa). Aspartate 297 provides a ligand contact to substrate. The interval 312–715 is 3-hydroxyacyl-CoA dehydrogenase; it reads RDVKQAAVLG…MAKNGQSFFG (404 aa). NAD(+) is bound by residues methionine 325, aspartate 344, 401–403, lysine 408, and serine 430; that span reads VVE. The active-site For 3-hydroxyacyl-CoA dehydrogenase activity is histidine 451. An NAD(+)-binding site is contributed by asparagine 454. Residues asparagine 501 and tyrosine 660 each coordinate substrate.

The protein in the N-terminal section; belongs to the enoyl-CoA hydratase/isomerase family. It in the C-terminal section; belongs to the 3-hydroxyacyl-CoA dehydrogenase family. As to quaternary structure, heterotetramer of two alpha chains (FadB) and two beta chains (FadA).

The catalysed reaction is a (3S)-3-hydroxyacyl-CoA + NAD(+) = a 3-oxoacyl-CoA + NADH + H(+). It carries out the reaction a (3S)-3-hydroxyacyl-CoA = a (2E)-enoyl-CoA + H2O. The enzyme catalyses a 4-saturated-(3S)-3-hydroxyacyl-CoA = a (3E)-enoyl-CoA + H2O. It catalyses the reaction (3S)-3-hydroxybutanoyl-CoA = (3R)-3-hydroxybutanoyl-CoA. The catalysed reaction is a (3Z)-enoyl-CoA = a 4-saturated (2E)-enoyl-CoA. It carries out the reaction a (3E)-enoyl-CoA = a 4-saturated (2E)-enoyl-CoA. The protein operates within lipid metabolism; fatty acid beta-oxidation. Its function is as follows. Involved in the aerobic and anaerobic degradation of long-chain fatty acids via beta-oxidation cycle. Catalyzes the formation of 3-oxoacyl-CoA from enoyl-CoA via L-3-hydroxyacyl-CoA. It can also use D-3-hydroxyacyl-CoA and cis-3-enoyl-CoA as substrate. The protein is Fatty acid oxidation complex subunit alpha of Pseudomonas fluorescens (strain SBW25).